A 332-amino-acid chain; its full sequence is Holliday junction branch migration complex subunit RuvB (332 aa).

Residues 1-181 are large ATPase domain (RuvB-L); that stretch reads MSRILDNEIM…FGITGHMEYY (181 aa). ATP contacts are provided by residues L20, R21, G62, K65, T66, T67, 128 to 130, R171, Y181, and R218; that span reads EDF. Mg(2+) is bound at residue T66. Residues 182-252 form a small ATPAse domain (RuvB-S) region; the sequence is AHAGLTEIVE…ITDKALTMLD (71 aa). The segment at 255-332 is head domain (RuvB-H); sequence HEGLDYVDQK…EHLGYEYSEK (78 aa). 4 residues coordinate DNA: R291, R310, R312, and R315.

The protein belongs to the RuvB family. In terms of assembly, homohexamer. Forms an RuvA(8)-RuvB(12)-Holliday junction (HJ) complex. HJ DNA is sandwiched between 2 RuvA tetramers; dsDNA enters through RuvA and exits via RuvB. An RuvB hexamer assembles on each DNA strand where it exits the tetramer. Each RuvB hexamer is contacted by two RuvA subunits (via domain III) on 2 adjacent RuvB subunits; this complex drives branch migration. In the full resolvosome a probable DNA-RuvA(4)-RuvB(12)-RuvC(2) complex forms which resolves the HJ.

Its subcellular location is the cytoplasm. The enzyme catalyses ATP + H2O = ADP + phosphate + H(+). Its function is as follows. The RuvA-RuvB-RuvC complex processes Holliday junction (HJ) DNA during genetic recombination and DNA repair, while the RuvA-RuvB complex plays an important role in the rescue of blocked DNA replication forks via replication fork reversal (RFR). RuvA specifically binds to HJ cruciform DNA, conferring on it an open structure. The RuvB hexamer acts as an ATP-dependent pump, pulling dsDNA into and through the RuvAB complex. RuvB forms 2 homohexamers on either side of HJ DNA bound by 1 or 2 RuvA tetramers; 4 subunits per hexamer contact DNA at a time. Coordinated motions by a converter formed by DNA-disengaged RuvB subunits stimulates ATP hydrolysis and nucleotide exchange. Immobilization of the converter enables RuvB to convert the ATP-contained energy into a lever motion, pulling 2 nucleotides of DNA out of the RuvA tetramer per ATP hydrolyzed, thus driving DNA branch migration. The RuvB motors rotate together with the DNA substrate, which together with the progressing nucleotide cycle form the mechanistic basis for DNA recombination by continuous HJ branch migration. Branch migration allows RuvC to scan DNA until it finds its consensus sequence, where it cleaves and resolves cruciform DNA. The protein is Holliday junction branch migration complex subunit RuvB of Streptococcus pneumoniae (strain JJA).